A 116-amino-acid polypeptide reads, in one-letter code: uncharacterized protein (116 aa).

The next 2 membrane-spanning stretches (helical) occupy residues 24–44 (VPFA…VLTA) and 70–90 (VILT…IILS).

Its subcellular location is the membrane. This is an uncharacterized protein from Saccharomyces cerevisiae (strain ATCC 204508 / S288c) (Baker's yeast).